We begin with the raw amino-acid sequence, 123 residues long: D-ribose pyranase (123 aa).

Catalysis depends on His20, which acts as the Proton donor. Substrate-binding positions include Asp28, His90, and 112–114 (YAN).

The protein belongs to the RbsD / FucU family. RbsD subfamily. Homodecamer.

The protein resides in the cytoplasm. The catalysed reaction is beta-D-ribopyranose = beta-D-ribofuranose. It functions in the pathway carbohydrate metabolism; D-ribose degradation; D-ribose 5-phosphate from beta-D-ribopyranose: step 1/2. In terms of biological role, catalyzes the interconversion of beta-pyran and beta-furan forms of D-ribose. The chain is D-ribose pyranase from Corynebacterium glutamicum (strain ATCC 13032 / DSM 20300 / JCM 1318 / BCRC 11384 / CCUG 27702 / LMG 3730 / NBRC 12168 / NCIMB 10025 / NRRL B-2784 / 534).